Reading from the N-terminus, the 356-residue chain is Dynein regulatory complex protein 10 (356 aa).

Residues 126–167 (SNREFFEEVRDREERAVAEQEQLKQKLKLQRVELQKAAGTIQ) are a coiled coil. Residues 173 to 209 (ARGEVSEVQSSTQQSRAAIEGSARAQSEADKSSFQSD) are disordered. The segment covering 178–187 (SEVQSSTQQS) has biased composition (low complexity). Residues 197-287 (AQSEADKSSF…LRQLQEYNSG (91 aa)) are a coiled coil. The 30-residue stretch at 319–348 (QNHAARVIQSYWRGFKKAREAAKKKAKKLE) folds into the IQ domain.

This sequence belongs to the DRC10 family. In terms of assembly, component of the nexin-dynein regulatory complex (N-DRC).

It localises to the cytoplasm. The protein localises to the cytoskeleton. It is found in the flagellum axoneme. Component of the nexin-dynein regulatory complex (N-DRC), a key regulator of ciliary/flagellar motility which maintains the alignment and integrity of the distal axoneme and regulates microtubule sliding in motile axonemes. In Chlamydomonas reinhardtii (Chlamydomonas smithii), this protein is Dynein regulatory complex protein 10.